Consider the following 454-residue polypeptide: MSENHSEGASRPVISRRPAAGLRADHPVHVPGDKSISHRALMIGALAVGETRISGLLEGEDVLRTAAAMRALGAEVVRDAPGSWRVAGRGIGGLTEPADVLDMGNSGTAARLLTGVLASHDLFAVMTGDASLRKRPMRRVTDPLAACGAGFHTRSGGRLPMAVRGTGEALPLHYRLPVASAQVKSAILLAGLNARGETVVEEPHATRDHSENMLRHFGATVQVEPTGDGAGRIVRLQGQPELRAADIVVPADPSSAAFPLVAALLVPGSEITLAGVGLNPLRTGLFDTLVEMGAALTIANRRIEGGEPVGDITVRASTLHGVEVPPERAPSMIDEFPILSVAAAVASGTTRMRGLAELRVKESDRLAATAALLSVNGVQVEIEGDDLIVIGCGGPPPGGGLVTTYMDHRLAMSALVLGLTTQAPVTADDAAFIDTSFPGFATLMTGLGADFSCA.

Residues 1-31 form a disordered region; sequence MSENHSEGASRPVISRRPAAGLRADHPVHVP. 3-phosphoshikimate is bound by residues lysine 34, serine 35, and arginine 39. Residue lysine 34 participates in phosphoenolpyruvate binding. Phosphoenolpyruvate-binding residues include glycine 107 and arginine 135. Residues serine 180, glutamine 182, aspartate 334, and lysine 361 each coordinate 3-phosphoshikimate. Residue glutamine 182 coordinates phosphoenolpyruvate. Aspartate 334 acts as the Proton acceptor in catalysis. Phosphoenolpyruvate contacts are provided by arginine 365 and arginine 409.

This sequence belongs to the EPSP synthase family. In terms of assembly, monomer.

Its subcellular location is the cytoplasm. It catalyses the reaction 3-phosphoshikimate + phosphoenolpyruvate = 5-O-(1-carboxyvinyl)-3-phosphoshikimate + phosphate. It functions in the pathway metabolic intermediate biosynthesis; chorismate biosynthesis; chorismate from D-erythrose 4-phosphate and phosphoenolpyruvate: step 6/7. Catalyzes the transfer of the enolpyruvyl moiety of phosphoenolpyruvate (PEP) to the 5-hydroxyl of shikimate-3-phosphate (S3P) to produce enolpyruvyl shikimate-3-phosphate and inorganic phosphate. This Granulibacter bethesdensis (strain ATCC BAA-1260 / CGDNIH1) protein is 3-phosphoshikimate 1-carboxyvinyltransferase.